A 377-amino-acid polypeptide reads, in one-letter code: Unsaturated glucuronyl hydrolase (377 aa).

The active-site Nucleophile is the Asp88. Asp149 serves as the catalytic Proton donor.

The protein belongs to the glycosyl hydrolase 88 family. Monomer.

It localises to the cytoplasm. The catalysed reaction is beta-D-Delta(4)-GlcA-(1-&gt;4)-beta-D-Glc-(1-&gt;4)-alpha-L-Rha-(1-&gt;3)-D-Glc + H2O = beta-D-Glc-(1-&gt;4)-alpha-L-Rha-(1-&gt;3)-D-Glc + 5-dehydro-4-deoxy-D-glucuronate. Its activity is regulated as follows. Partially inhibited by divalent metal ions such as calcium, copper, iron and mercury. Catalyzes the hydrolysis of oligosaccharides with unsaturated glucuronyl residues at the non-reducing terminal, to a sugar or an amino sugar, and an unsaturated D-glucuronic acid (GlcA), which is nonenzymatically converted immediately to alpha-keto acid. The polypeptide is Unsaturated glucuronyl hydrolase (ugl) (Bacillus sp. (strain GL1)).